A 128-amino-acid polypeptide reads, in one-letter code: Ribonuclease pancreatic (128 aa).

Residues 1 to 15 (SESSAKKFERQHMDS) show a composition bias toward basic and acidic residues. Positions 1-28 (SESSAKKFERQHMDSRGSPSTNPNYCNE) are disordered. Residues Lys7 and Arg10 each contribute to the substrate site. The Proton acceptor role is filled by His12. 4 disulfide bridges follow: Cys26/Cys84, Cys40/Cys95, Cys58/Cys110, and Cys65/Cys72. Asn34 is a glycosylation site (N-linked (GlcNAc...) asparagine). Residues 41–45 (KPVNT), Lys66, and Arg85 contribute to the substrate site. The active-site Proton donor is the His119.

It belongs to the pancreatic ribonuclease family. Monomer. Interacts with and forms tight 1:1 complexes with RNH1. Dimerization of two such complexes may occur. Interaction with RNH1 inhibits this protein. In terms of tissue distribution, pancreas.

It is found in the secreted. The enzyme catalyses an [RNA] containing cytidine + H2O = an [RNA]-3'-cytidine-3'-phosphate + a 5'-hydroxy-ribonucleotide-3'-[RNA].. It carries out the reaction an [RNA] containing uridine + H2O = an [RNA]-3'-uridine-3'-phosphate + a 5'-hydroxy-ribonucleotide-3'-[RNA].. Functionally, endonuclease that catalyzes the cleavage of RNA on the 3' side of pyrimidine nucleotides. Acts on single-stranded and double-stranded RNA. This chain is Ribonuclease pancreatic (RNASE1), found in Myocastor coypus (Coypu).